Consider the following 514-residue polypeptide: Histidine ammonia-lyase (514 aa).

A cross-link (5-imidazolinone (Ala-Gly)) is located at residues 143–145 (ASG). Residue serine 144 is modified to 2,3-didehydroalanine (Ser).

This sequence belongs to the PAL/histidase family. In terms of processing, contains an active site 4-methylidene-imidazol-5-one (MIO), which is formed autocatalytically by cyclization and dehydration of residues Ala-Ser-Gly.

It is found in the cytoplasm. The catalysed reaction is L-histidine = trans-urocanate + NH4(+). It participates in amino-acid degradation; L-histidine degradation into L-glutamate; N-formimidoyl-L-glutamate from L-histidine: step 1/3. The sequence is that of Histidine ammonia-lyase from Photorhabdus laumondii subsp. laumondii (strain DSM 15139 / CIP 105565 / TT01) (Photorhabdus luminescens subsp. laumondii).